The chain runs to 906 residues: Catenin alpha-2 (906 aa).

Positions 866–880 (KKPLVKREKPEEYQT) are enriched in basic and acidic residues. The tract at residues 866–892 (KKPLVKREKPEEYQTRVRRGSQKKHIS) is disordered. Positions 881-891 (RVRRGSQKKHI) are enriched in basic residues.

The protein belongs to the vinculin/alpha-catenin family. As to quaternary structure, interacts with CDH1 and CDH2. As to expression, mainly in the nervous system (at protein level).

The protein resides in the cell membrane. Its subcellular location is the cytoplasm. The protein localises to the cytoskeleton. It localises to the cell junction. It is found in the adherens junction. The protein resides in the cell projection. Its subcellular location is the axon. The protein localises to the nucleus. In terms of biological role, may function as a linker between cadherin adhesion receptors and the cytoskeleton to regulate cell-cell adhesion and differentiation in the nervous system. In Gallus gallus (Chicken), this protein is Catenin alpha-2 (CTNNA2).